Consider the following 178-residue polypeptide: Ribonuclease M5 (178 aa).

Residues 4 to 100 (NEFIVVEGRD…KIGVEHADLI (97 aa)) form the Toprim domain. Residues Glu-10, Asp-56, and Asp-58 each contribute to the Mg(2+) site.

The protein belongs to the ribonuclease M5 family. Mg(2+) serves as cofactor.

Its subcellular location is the cytoplasm. The enzyme catalyses Endonucleolytic cleavage of RNA, removing 21 and 42 nucleotides, respectively, from the 5'- and 3'-termini of a 5S-rRNA precursor.. Required for correct processing of both the 5' and 3' ends of 5S rRNA precursor. Cleaves both sides of a double-stranded region yielding mature 5S rRNA in one step. This chain is Ribonuclease M5, found in Staphylococcus aureus (strain NCTC 8325 / PS 47).